The chain runs to 376 residues: Thymidine kinase (376 aa).

The interval 1–44 (MASYPGHQHASAFDQAARSRGHSNRRTALRPRRQQEATEVRPEQ) is disordered. Residues 19-32 (SRGHSNRRTALRPR) show a composition bias toward basic residues. Over residues 33–44 (RQQEATEVRPEQ) the composition is skewed to basic and acidic residues. ATP is bound at residue 56-63 (GPHGMGKT). The active-site Proton acceptor is the Glu83. Tyr101 and Gln125 together coordinate substrate. Arg216 lines the ATP pocket. Position 222 (Arg222) interacts with substrate. Residues 260 to 280 (GQLSGTAVPPQGAEPQSNAGP) are disordered.

It belongs to the herpesviridae thymidine kinase family. As to quaternary structure, homodimer.

The enzyme catalyses thymidine + ATP = dTMP + ADP + H(+). Its function is as follows. Catalyzes the transfer of the gamma-phospho group of ATP to thymidine to generate dTMP in the salvage pathway of pyrimidine synthesis. The dTMP serves as a substrate for DNA polymerase during viral DNA replication. Allows the virus to be reactivated and to grow in non-proliferative cells lacking a high concentration of phosphorylated nucleic acid precursors. In Human herpesvirus 1 (strain HFEM) (HHV-1), this protein is Thymidine kinase.